Here is a 373-residue protein sequence, read N- to C-terminus: Quinolinate synthase (373 aa).

Iminosuccinate is bound by residues His46 and Ser63. Cys109 contributes to the [4Fe-4S] cluster binding site. Residues 142-144 and Ser163 contribute to the iminosuccinate site; that span reads YMN. Position 232 (Cys232) interacts with [4Fe-4S] cluster. Iminosuccinate is bound by residues 258–260 and Thr275; that span reads HPE. Cys324 contributes to the [4Fe-4S] cluster binding site.

Belongs to the quinolinate synthase family. Type 3 subfamily. [4Fe-4S] cluster is required as a cofactor.

Its subcellular location is the cytoplasm. It catalyses the reaction iminosuccinate + dihydroxyacetone phosphate = quinolinate + phosphate + 2 H2O + H(+). It participates in cofactor biosynthesis; NAD(+) biosynthesis; quinolinate from iminoaspartate: step 1/1. Functionally, catalyzes the condensation of iminoaspartate with dihydroxyacetone phosphate to form quinolinate. The chain is Quinolinate synthase from Acidobacterium capsulatum (strain ATCC 51196 / DSM 11244 / BCRC 80197 / JCM 7670 / NBRC 15755 / NCIMB 13165 / 161).